We begin with the raw amino-acid sequence, 432 residues long: Probable pectate lyase 22 (432 aa).

The N-terminal stretch at 1 to 45 (MFRPNSLLIPSNLSTTKSQRNTMLNSSYLSFALIFFCCILFSALA) is a signal peptide. A glycan (N-linked (GlcNAc...) asparagine) is linked at asparagine 65. 3 residues coordinate Ca(2+): aspartate 228, aspartate 252, and aspartate 256. Arginine 308 is a catalytic residue.

The protein belongs to the polysaccharide lyase 1 family. The cofactor is Ca(2+).

It carries out the reaction Eliminative cleavage of (1-&gt;4)-alpha-D-galacturonan to give oligosaccharides with 4-deoxy-alpha-D-galact-4-enuronosyl groups at their non-reducing ends.. The protein operates within glycan metabolism; pectin degradation; 2-dehydro-3-deoxy-D-gluconate from pectin: step 2/5. The chain is Probable pectate lyase 22 from Arabidopsis thaliana (Mouse-ear cress).